The sequence spans 330 residues: 6-phosphogluconolactonase (330 aa).

Belongs to the cycloisomerase 2 family.

It catalyses the reaction 6-phospho-D-glucono-1,5-lactone + H2O = 6-phospho-D-gluconate + H(+). The protein operates within carbohydrate degradation; pentose phosphate pathway; D-ribulose 5-phosphate from D-glucose 6-phosphate (oxidative stage): step 2/3. Catalyzes the hydrolysis of 6-phosphogluconolactone to 6-phosphogluconate. The protein is 6-phosphogluconolactonase of Erwinia tasmaniensis (strain DSM 17950 / CFBP 7177 / CIP 109463 / NCPPB 4357 / Et1/99).